Consider the following 626-residue polypeptide: Elongation factor 4 (626 aa).

Residues 14-195 (SLIRNFCIIA…RIVVDVPAPT (182 aa)) form the tr-type G domain. GTP-binding positions include 26-31 (DHGKST) and 142-145 (NKID). Positions 603 to 626 (LSTGEGGNDRDTKDKIRAAQKSEG) are disordered. The span at 609-626 (GNDRDTKDKIRAAQKSEG) shows a compositional bias: basic and acidic residues.

It belongs to the TRAFAC class translation factor GTPase superfamily. Classic translation factor GTPase family. LepA subfamily.

The protein resides in the cell membrane. The catalysed reaction is GTP + H2O = GDP + phosphate + H(+). In terms of biological role, required for accurate and efficient protein synthesis under certain stress conditions. May act as a fidelity factor of the translation reaction, by catalyzing a one-codon backward translocation of tRNAs on improperly translocated ribosomes. Back-translocation proceeds from a post-translocation (POST) complex to a pre-translocation (PRE) complex, thus giving elongation factor G a second chance to translocate the tRNAs correctly. Binds to ribosomes in a GTP-dependent manner. In Bifidobacterium animalis subsp. lactis (strain AD011), this protein is Elongation factor 4.